The primary structure comprises 154 residues: Crossover junction endodeoxyribonuclease RuvC (154 aa).

Active-site residues include Asp-7, Glu-67, and Asp-139. Mg(2+) is bound by residues Asp-7, Glu-67, and Asp-139.

This sequence belongs to the RuvC family. As to quaternary structure, homodimer which binds Holliday junction (HJ) DNA. The HJ becomes 2-fold symmetrical on binding to RuvC with unstacked arms; it has a different conformation from HJ DNA in complex with RuvA. In the full resolvosome a probable DNA-RuvA(4)-RuvB(12)-RuvC(2) complex forms which resolves the HJ. It depends on Mg(2+) as a cofactor.

It localises to the cytoplasm. It catalyses the reaction Endonucleolytic cleavage at a junction such as a reciprocal single-stranded crossover between two homologous DNA duplexes (Holliday junction).. In terms of biological role, the RuvA-RuvB-RuvC complex processes Holliday junction (HJ) DNA during genetic recombination and DNA repair. Endonuclease that resolves HJ intermediates. Cleaves cruciform DNA by making single-stranded nicks across the HJ at symmetrical positions within the homologous arms, yielding a 5'-phosphate and a 3'-hydroxyl group; requires a central core of homology in the junction. The consensus cleavage sequence is 5'-(A/T)TT(C/G)-3'. Cleavage occurs on the 3'-side of the TT dinucleotide at the point of strand exchange. HJ branch migration catalyzed by RuvA-RuvB allows RuvC to scan DNA until it finds its consensus sequence, where it cleaves and resolves the cruciform DNA. This Prochlorococcus marinus (strain MIT 9313) protein is Crossover junction endodeoxyribonuclease RuvC.